Here is a 129-residue protein sequence, read N- to C-terminus: Ribosome-binding factor A (129 aa).

This sequence belongs to the RbfA family. Monomer. Binds 30S ribosomal subunits, but not 50S ribosomal subunits or 70S ribosomes.

It is found in the cytoplasm. Its function is as follows. One of several proteins that assist in the late maturation steps of the functional core of the 30S ribosomal subunit. Associates with free 30S ribosomal subunits (but not with 30S subunits that are part of 70S ribosomes or polysomes). Required for efficient processing of 16S rRNA. May interact with the 5'-terminal helix region of 16S rRNA. The protein is Ribosome-binding factor A of Pseudomonas aeruginosa (strain UCBPP-PA14).